A 438-amino-acid chain; its full sequence is 3-phosphoshikimate 1-carboxyvinyltransferase (438 aa).

3-phosphoshikimate contacts are provided by K20, S21, and R25. K20 contacts phosphoenolpyruvate. Phosphoenolpyruvate is bound by residues G90 and R118. 3-phosphoshikimate contacts are provided by S163, S164, Q165, S191, D320, and K347. Q165 is a binding site for phosphoenolpyruvate. The active-site Proton acceptor is the D320. Positions 351 and 392 each coordinate phosphoenolpyruvate.

The protein belongs to the EPSP synthase family. As to quaternary structure, monomer.

The protein localises to the cytoplasm. The catalysed reaction is 3-phosphoshikimate + phosphoenolpyruvate = 5-O-(1-carboxyvinyl)-3-phosphoshikimate + phosphate. It functions in the pathway metabolic intermediate biosynthesis; chorismate biosynthesis. Its function is as follows. Catalyzes the transfer of the enolpyruvyl moiety of phosphoenolpyruvate (PEP) to the 5-hydroxyl of shikimate-3-phosphate (S3P) to produce enolpyruvyl shikimate-3-phosphate and inorganic phosphate. The polypeptide is 3-phosphoshikimate 1-carboxyvinyltransferase (Natronomonas pharaonis (strain ATCC 35678 / DSM 2160 / CIP 103997 / JCM 8858 / NBRC 14720 / NCIMB 2260 / Gabara) (Halobacterium pharaonis)).